We begin with the raw amino-acid sequence, 129 residues long: Urease subunit beta (129 aa).

This sequence belongs to the urease beta subunit family. As to quaternary structure, heterotrimer of UreA (gamma), UreB (beta) and UreC (alpha) subunits. Three heterotrimers associate to form the active enzyme.

It is found in the cytoplasm. The catalysed reaction is urea + 2 H2O + H(+) = hydrogencarbonate + 2 NH4(+). The protein operates within nitrogen metabolism; urea degradation; CO(2) and NH(3) from urea (urease route): step 1/1. The polypeptide is Urease subunit beta (Photorhabdus laumondii subsp. laumondii (strain DSM 15139 / CIP 105565 / TT01) (Photorhabdus luminescens subsp. laumondii)).